The following is a 325-amino-acid chain: Holliday junction branch migration complex subunit RuvB (325 aa).

Residues 1–180 form a large ATPase domain (RuvB-L) region; it reads MKNQLLDAKV…FGIHLKLNFY (180 aa). ATP-binding positions include Leu19, Arg20, Gly61, Lys64, Thr65, Ser66, 127–129, Arg170, Tyr180, and Arg217; that span reads EDF. Thr65 contacts Mg(2+). Positions 181-251 are small ATPAse domain (RuvB-S); sequence SCEELTQIVE…ITDYALNQLG (71 aa). The head domain (RuvB-H) stretch occupies residues 254-325; sequence KLGLDSSDHK…ITANALKHLH (72 aa). Residues Arg290, Arg309, and Arg314 each contribute to the DNA site.

It belongs to the RuvB family. In terms of assembly, homohexamer. Forms an RuvA(8)-RuvB(12)-Holliday junction (HJ) complex. HJ DNA is sandwiched between 2 RuvA tetramers; dsDNA enters through RuvA and exits via RuvB. An RuvB hexamer assembles on each DNA strand where it exits the tetramer. Each RuvB hexamer is contacted by two RuvA subunits (via domain III) on 2 adjacent RuvB subunits; this complex drives branch migration. In the full resolvosome a probable DNA-RuvA(4)-RuvB(12)-RuvC(2) complex forms which resolves the HJ.

It is found in the cytoplasm. The catalysed reaction is ATP + H2O = ADP + phosphate + H(+). Its function is as follows. The RuvA-RuvB-RuvC complex processes Holliday junction (HJ) DNA during genetic recombination and DNA repair, while the RuvA-RuvB complex plays an important role in the rescue of blocked DNA replication forks via replication fork reversal (RFR). RuvA specifically binds to HJ cruciform DNA, conferring on it an open structure. The RuvB hexamer acts as an ATP-dependent pump, pulling dsDNA into and through the RuvAB complex. RuvB forms 2 homohexamers on either side of HJ DNA bound by 1 or 2 RuvA tetramers; 4 subunits per hexamer contact DNA at a time. Coordinated motions by a converter formed by DNA-disengaged RuvB subunits stimulates ATP hydrolysis and nucleotide exchange. Immobilization of the converter enables RuvB to convert the ATP-contained energy into a lever motion, pulling 2 nucleotides of DNA out of the RuvA tetramer per ATP hydrolyzed, thus driving DNA branch migration. The RuvB motors rotate together with the DNA substrate, which together with the progressing nucleotide cycle form the mechanistic basis for DNA recombination by continuous HJ branch migration. Branch migration allows RuvC to scan DNA until it finds its consensus sequence, where it cleaves and resolves cruciform DNA. The sequence is that of Holliday junction branch migration complex subunit RuvB from Orientia tsutsugamushi (strain Boryong) (Rickettsia tsutsugamushi).